A 585-amino-acid chain; its full sequence is SLAIN motif-containing protein-like (585 aa).

Disordered regions lie at residues 1–34 (MVVPDSGSDIQPADNGDTDKVMSNSEPELDPNLT), 55–125 (NQTL…RVEE), 324–365 (QDYA…EDEC), 402–476 (PRLS…SDGQ), and 492–585 (GSMS…DGCY). The span at 68–83 (GGTNNSNLKAGSNINN) shows a compositional bias: polar residues. A compositionally biased stretch (low complexity) spans 327–345 (ASTSASRRSSSASLQSLRR). A compositionally biased stretch (acidic residues) spans 351 to 365 (QEFDSYSQEDEEDEC). Composition is skewed to polar residues over residues 425-434 (PNLTPRTSLR), 441-476 (NSRSMEANLQSSGNRTSCLPHSPKGASSSRMRSDGQ), and 549-563 (ASPSSRTRLPQTPRS). A compositionally biased stretch (basic and acidic residues) spans 575–585 (LTDESWKDGCY).

The protein belongs to the SLAIN motif-containing family.

This Danio rerio (Zebrafish) protein is SLAIN motif-containing protein-like.